The sequence spans 197 residues: Prefoldin subunit 3 (197 aa).

N-acetylalanine is present on Ala-2. At Lys-59 the chain carries N6-acetyllysine.

It belongs to the prefoldin subunit alpha family. As to quaternary structure, heterohexamer of two PFD-alpha type and four PFD-beta type subunits. Binds to the C-terminal part of VHL.

The protein localises to the cytoplasm. Its subcellular location is the nucleus. Functionally, binds specifically to cytosolic chaperonin (c-CPN) and transfers target proteins to it. Binds to nascent polypeptide chain and promotes folding in an environment in which there are many competing pathways for nonnative proteins. The protein is Prefoldin subunit 3 (VBP1) of Bos taurus (Bovine).